Consider the following 177-residue polypeptide: Transcription factor E (177 aa).

The region spanning 9–91 (VEELLNELVG…YWRINYDKAL (83 aa)) is the HTH TFE/IIEalpha-type domain.

The protein belongs to the TFE family. As to quaternary structure, monomer. Interaction with RNA polymerase subunits RpoF and RpoE is necessary for Tfe stimulatory transcription activity. Able to interact with Tbp and RNA polymerase in the absence of DNA promoter. Interacts both with the preinitiation and elongation complexes.

Functionally, transcription factor that plays a role in the activation of archaeal genes transcribed by RNA polymerase. Facilitates transcription initiation by enhancing TATA-box recognition by TATA-box-binding protein (Tbp), and transcription factor B (Tfb) and RNA polymerase recruitment. Not absolutely required for transcription in vitro, but particularly important in cases where Tbp or Tfb function is not optimal. It dynamically alters the nucleic acid-binding properties of RNA polymerases by stabilizing the initiation complex and destabilizing elongation complexes. Seems to translocate with the RNA polymerase following initiation and acts by binding to the non template strand of the transcription bubble in elongation complexes. In Archaeoglobus fulgidus (strain ATCC 49558 / DSM 4304 / JCM 9628 / NBRC 100126 / VC-16), this protein is Transcription factor E.